Reading from the N-terminus, the 525-residue chain is Probable histidine ammonia-lyase (525 aa).

Positions 145–147 (ASG) form a cross-link, 5-imidazolinone (Ala-Gly). A 2,3-didehydroalanine (Ser) modification is found at S146.

Belongs to the PAL/histidase family. Post-translationally, contains an active site 4-methylidene-imidazol-5-one (MIO), which is formed autocatalytically by cyclization and dehydration of residues Ala-Ser-Gly.

It localises to the cytoplasm. The enzyme catalyses L-histidine = trans-urocanate + NH4(+). Its pathway is amino-acid degradation; L-histidine degradation into L-glutamate; N-formimidoyl-L-glutamate from L-histidine: step 1/3. The protein is Probable histidine ammonia-lyase of Halobacterium salinarum (strain ATCC 29341 / DSM 671 / R1).